The chain runs to 607 residues: Oligoendopeptidase F homolog (607 aa).

His-384 is a Zn(2+) binding site. Glu-385 is a catalytic residue. Positions 388 and 391 each coordinate Zn(2+).

Belongs to the peptidase M3B family. Zn(2+) serves as cofactor.

This Mycoplasma genitalium (strain ATCC 33530 / DSM 19775 / NCTC 10195 / G37) (Mycoplasmoides genitalium) protein is Oligoendopeptidase F homolog (pepF).